Here is a 253-residue protein sequence, read N- to C-terminus: Phosphoribosylaminoimidazole-succinocarboxamide synthase (253 aa).

The protein belongs to the SAICAR synthetase family.

The catalysed reaction is 5-amino-1-(5-phospho-D-ribosyl)imidazole-4-carboxylate + L-aspartate + ATP = (2S)-2-[5-amino-1-(5-phospho-beta-D-ribosyl)imidazole-4-carboxamido]succinate + ADP + phosphate + 2 H(+). It functions in the pathway purine metabolism; IMP biosynthesis via de novo pathway; 5-amino-1-(5-phospho-D-ribosyl)imidazole-4-carboxamide from 5-amino-1-(5-phospho-D-ribosyl)imidazole-4-carboxylate: step 1/2. The chain is Phosphoribosylaminoimidazole-succinocarboxamide synthase from Dinoroseobacter shibae (strain DSM 16493 / NCIMB 14021 / DFL 12).